Here is a 159-residue protein sequence, read N- to C-terminus: ATP synthase subunit b (159 aa).

Residues 7 to 27 (VIFMTIINFCILVAILKHFFW) form a helical membrane-spanning segment.

Belongs to the ATPase B chain family. F-type ATPases have 2 components, F(1) - the catalytic core - and F(0) - the membrane proton channel. F(1) has five subunits: alpha(3), beta(3), gamma(1), delta(1), epsilon(1). F(0) has three main subunits: a(1), b(2) and c(10-14). The alpha and beta chains form an alternating ring which encloses part of the gamma chain. F(1) is attached to F(0) by a central stalk formed by the gamma and epsilon chains, while a peripheral stalk is formed by the delta and b chains.

It is found in the cell membrane. Functionally, f(1)F(0) ATP synthase produces ATP from ADP in the presence of a proton or sodium gradient. F-type ATPases consist of two structural domains, F(1) containing the extramembraneous catalytic core and F(0) containing the membrane proton channel, linked together by a central stalk and a peripheral stalk. During catalysis, ATP synthesis in the catalytic domain of F(1) is coupled via a rotary mechanism of the central stalk subunits to proton translocation. Its function is as follows. Component of the F(0) channel, it forms part of the peripheral stalk, linking F(1) to F(0). This Clostridium botulinum (strain Alaska E43 / Type E3) protein is ATP synthase subunit b.